The sequence spans 256 residues: Hydroxyacylglutathione hydrolase (256 aa).

The Zn(2+) site is built by histidine 53, histidine 55, aspartate 57, histidine 58, histidine 113, aspartate 130, and histidine 168.

The protein belongs to the metallo-beta-lactamase superfamily. Glyoxalase II family. Monomer. Zn(2+) is required as a cofactor.

The enzyme catalyses an S-(2-hydroxyacyl)glutathione + H2O = a 2-hydroxy carboxylate + glutathione + H(+). It functions in the pathway secondary metabolite metabolism; methylglyoxal degradation; (R)-lactate from methylglyoxal: step 2/2. Functionally, thiolesterase that catalyzes the hydrolysis of S-D-lactoyl-glutathione to form glutathione and D-lactic acid. This Tolumonas auensis (strain DSM 9187 / NBRC 110442 / TA 4) protein is Hydroxyacylglutathione hydrolase.